The chain runs to 273 residues: Glutamate racemase (273 aa).

Residues 19–20 (DS) and 51–52 (YG) each bind substrate. The active-site Proton donor/acceptor is the cysteine 83. 84-85 (NT) contacts substrate. Residue cysteine 198 is the Proton donor/acceptor of the active site. Residue 199 to 200 (TH) participates in substrate binding.

Belongs to the aspartate/glutamate racemases family.

It carries out the reaction L-glutamate = D-glutamate. It functions in the pathway cell wall biogenesis; peptidoglycan biosynthesis. Functionally, provides the (R)-glutamate required for cell wall biosynthesis. The chain is Glutamate racemase from Agrobacterium fabrum (strain C58 / ATCC 33970) (Agrobacterium tumefaciens (strain C58)).